The chain runs to 576 residues: Arginine--tRNA ligase (576 aa).

The 'HIGH' region signature appears at 122-132 (PNVAKQMHVGH).

Belongs to the class-I aminoacyl-tRNA synthetase family. As to quaternary structure, monomer.

Its subcellular location is the cytoplasm. The enzyme catalyses tRNA(Arg) + L-arginine + ATP = L-arginyl-tRNA(Arg) + AMP + diphosphate. In Photorhabdus laumondii subsp. laumondii (strain DSM 15139 / CIP 105565 / TT01) (Photorhabdus luminescens subsp. laumondii), this protein is Arginine--tRNA ligase.